A 339-amino-acid chain; its full sequence is Tetraacyldisaccharide 4'-kinase (339 aa).

ATP is bound at residue 61 to 68; the sequence is TAGGTGKT.

Belongs to the LpxK family.

The catalysed reaction is a lipid A disaccharide + ATP = a lipid IVA + ADP + H(+). Its pathway is glycolipid biosynthesis; lipid IV(A) biosynthesis; lipid IV(A) from (3R)-3-hydroxytetradecanoyl-[acyl-carrier-protein] and UDP-N-acetyl-alpha-D-glucosamine: step 6/6. In terms of biological role, transfers the gamma-phosphate of ATP to the 4'-position of a tetraacyldisaccharide 1-phosphate intermediate (termed DS-1-P) to form tetraacyldisaccharide 1,4'-bis-phosphate (lipid IVA). This chain is Tetraacyldisaccharide 4'-kinase, found in Stenotrophomonas maltophilia (strain R551-3).